The chain runs to 1044 residues: Outer dynein arm-docking complex subunit 2 (1044 aa).

Basic and acidic residues-rich tracts occupy residues 317–338 (IKFS…EVAI) and 379–401 (SKDR…EKSR). Disordered regions lie at residues 317 to 409 (IKFS…PGRA) and 423 to 446 (ISDS…ANAD). HEAT repeat units lie at residues 448–485 (PSEY…AQET), 487–527 (QLAI…NPQI), 530–568 (NIVD…FRRA), 627–665 (AIRK…EENY), and 668–706 (AIKA…DEET). ARM repeat units follow at residues 484 to 523 (ETCQ…EISH), 525 to 564 (PQIR…NVAK), 535 to 577 (GGLP…RHGG), 622 to 661 (YANK…ECAS), 663 to 702 (ENYR…QCAE), 746 to 785 (KENV…ECCQ), 828 to 867 (PESM…PCIQ), 871 to 910 (DAGE…NIAK), 912 to 951 (QENL…RCCM), 953 to 992 (GRNR…QLSE), and 1004 to 1031 (GAVK…ISNI). 5 HEAT repeats span residues 831 to 870 (MMII…QNAK), 874 to 914 (EMVR…DQEN), 916 to 955 (AVIT…WGRN), 958 to 996 (AFGE…DADN), and 999 to 1037 (TMHE…LALA).

As to quaternary structure, component of the outer dynein arm-docking complex along with ODAD1, ODAD3, ODAD4 and CLXN. Interacts with CFAP61. As to expression, expressed in trachea multiciliated cells.

Its subcellular location is the cytoplasm. It localises to the cytoskeleton. The protein resides in the cilium axoneme. The protein localises to the cilium basal body. In terms of biological role, component of the outer dynein arm-docking complex (ODA-DC) that mediates outer dynein arms (ODA) binding onto the doublet microtubule. Involved in mediating assembly of both ODAs and their axonemal docking complex onto ciliary microtubules. The protein is Outer dynein arm-docking complex subunit 2 (ODAD2) of Bos taurus (Bovine).